Consider the following 563-residue polypeptide: 5-aminolevulinate synthase, mitochondrial (563 aa).

A mitochondrion-targeting transit peptide spans 1 to 18; that stretch reads MESLVRQSKKLCPYIGRT. Positions 137, 251, and 270 each coordinate substrate. Pyridoxal 5'-phosphate-binding residues include serine 303, histidine 331, and threonine 373. The active site involves lysine 376. Position 376 is an N6-(pyridoxal phosphate)lysine (lysine 376). 2 residues coordinate pyridoxal 5'-phosphate: threonine 405 and threonine 406. A substrate-binding site is contributed by threonine 491.

Belongs to the class-II pyridoxal-phosphate-dependent aminotransferase family. As to quaternary structure, homodimer. Pyridoxal 5'-phosphate serves as cofactor.

It is found in the mitochondrion matrix. It catalyses the reaction succinyl-CoA + glycine + H(+) = 5-aminolevulinate + CO2 + CoA. It functions in the pathway porphyrin-containing compound metabolism; protoporphyrin-IX biosynthesis; 5-aminolevulinate from glycine: step 1/1. Catalyzes the synthesis of 5-aminolevulinate (ALA) from succinyl-CoA and glycine, the first and rate-limiting step in heme biosynthesis. This chain is 5-aminolevulinate synthase, mitochondrial (HEM1), found in Yarrowia lipolytica (strain CLIB 122 / E 150) (Yeast).